An 88-amino-acid chain; its full sequence is Apolipoprotein C-I (88 aa).

An N-terminal signal peptide occupies residues Met1–Ala26.

It belongs to the apolipoprotein C1 family.

The protein localises to the secreted. Inhibitor of lipoprotein binding to the low density lipoprotein (LDL) receptor, LDL receptor-related protein, and very low density lipoprotein (VLDL) receptor. Associates with high density lipoproteins (HDL) and the triacylglycerol-rich lipoproteins in the plasma and makes up about 10% of the protein of the VLDL and 2% of that of HDL. Appears to interfere directly with fatty acid uptake and is also the major plasma inhibitor of cholesteryl ester transfer protein (CETP). Binds free fatty acids and reduces their intracellular esterification. Modulates the interaction of APOE with beta-migrating VLDL and inhibits binding of beta-VLDL to the LDL receptor-related protein. This Tupaia glis (Common tree shrew) protein is Apolipoprotein C-I (APOC1).